We begin with the raw amino-acid sequence, 600 residues long: Proline--tRNA ligase (600 aa).

The protein belongs to the class-II aminoacyl-tRNA synthetase family. ProS type 1 subfamily. As to quaternary structure, homodimer.

It is found in the cytoplasm. The enzyme catalyses tRNA(Pro) + L-proline + ATP = L-prolyl-tRNA(Pro) + AMP + diphosphate. Functionally, catalyzes the attachment of proline to tRNA(Pro) in a two-step reaction: proline is first activated by ATP to form Pro-AMP and then transferred to the acceptor end of tRNA(Pro). As ProRS can inadvertently accommodate and process non-cognate amino acids such as alanine and cysteine, to avoid such errors it has two additional distinct editing activities against alanine. One activity is designated as 'pretransfer' editing and involves the tRNA(Pro)-independent hydrolysis of activated Ala-AMP. The other activity is designated 'posttransfer' editing and involves deacylation of mischarged Ala-tRNA(Pro). The misacylated Cys-tRNA(Pro) is not edited by ProRS. This chain is Proline--tRNA ligase, found in Gloeothece citriformis (strain PCC 7424) (Cyanothece sp. (strain PCC 7424)).